A 244-amino-acid chain; its full sequence is Probable transcriptional regulatory protein DR_2548 (244 aa).

Positions 1 to 23 are disordered; it reads MAGHSKWAQIKRKKGANDKKRSA.

It belongs to the TACO1 family.

It is found in the cytoplasm. This is Probable transcriptional regulatory protein DR_2548 from Deinococcus radiodurans (strain ATCC 13939 / DSM 20539 / JCM 16871 / CCUG 27074 / LMG 4051 / NBRC 15346 / NCIMB 9279 / VKM B-1422 / R1).